A 58-amino-acid chain; its full sequence is Ribulose bisphosphate carboxylase large chain (58 aa).

Residues 1-2 constitute a propeptide that is removed on maturation; the sequence is MS. Pro-3 carries the post-translational modification N-acetylproline. At Lys-14 the chain carries N6,N6,N6-trimethyllysine.

This sequence belongs to the RuBisCO large chain family. Type I subfamily. As to quaternary structure, heterohexadecamer of 8 large chains and 8 small chains.

The protein resides in the plastid. The protein localises to the chloroplast. It carries out the reaction 2 (2R)-3-phosphoglycerate + 2 H(+) = D-ribulose 1,5-bisphosphate + CO2 + H2O. It catalyses the reaction D-ribulose 1,5-bisphosphate + O2 = 2-phosphoglycolate + (2R)-3-phosphoglycerate + 2 H(+). In terms of biological role, ruBisCO catalyzes two reactions: the carboxylation of D-ribulose 1,5-bisphosphate, the primary event in carbon dioxide fixation, as well as the oxidative fragmentation of the pentose substrate in the photorespiration process. Both reactions occur simultaneously and in competition at the same active site. This Euonymus maackii (Maack's spindle tree) protein is Ribulose bisphosphate carboxylase large chain (rbcL).